A 308-amino-acid chain; its full sequence is Cysteine synthase (308 aa).

Lys-45 bears the N6-(pyridoxal phosphate)lysine mark. Residues Asn-75, 179-183 (GTGGT), and Ser-267 each bind pyridoxal 5'-phosphate.

The protein belongs to the cysteine synthase/cystathionine beta-synthase family. In terms of assembly, homodimer. Forms CymR(2):CysK(2) or CymR(4):CysK(4) complexes in the absence of O-acetylserine. Requires pyridoxal 5'-phosphate as cofactor.

It carries out the reaction O-acetyl-L-serine + hydrogen sulfide = L-cysteine + acetate. The protein operates within amino-acid biosynthesis; L-cysteine biosynthesis; L-cysteine from L-serine: step 2/2. Functionally, catalyzes the conversion of O-acetylserine to cysteine. Also acts as a sensor of cysteine availability in the signal transduction pathway modulating CymR activity. When cysteine is present, the pool of O-acetylserine (OAS) is low, which leads to the formation of a CymR-CysK complex and transcriptional repression of the CymR regulon occurs. In the absence of cysteine, the OAS pool is high and the CymR-CysK complex is mostly dissociated, leading to a faster dissociation of CymR from its DNA targets and the lifting of CymR-dependent repression. The chain is Cysteine synthase (cysK) from Bacillus subtilis (strain 168).